We begin with the raw amino-acid sequence, 177 residues long: Adenine phosphoribosyltransferase (177 aa).

This sequence belongs to the purine/pyrimidine phosphoribosyltransferase family. In terms of assembly, homodimer.

The protein resides in the cytoplasm. The enzyme catalyses AMP + diphosphate = 5-phospho-alpha-D-ribose 1-diphosphate + adenine. Its pathway is purine metabolism; AMP biosynthesis via salvage pathway; AMP from adenine: step 1/1. Its function is as follows. Catalyzes a salvage reaction resulting in the formation of AMP, that is energically less costly than de novo synthesis. In Idiomarina loihiensis (strain ATCC BAA-735 / DSM 15497 / L2-TR), this protein is Adenine phosphoribosyltransferase.